The primary structure comprises 52 residues: MPQIFPMNWFLMSLMIMMILIFMTINFYFFSMKMPNKNMFNLNKKTKYNFKW.

The helical transmembrane segment at 10 to 30 (FLMSLMIMMILIFMTINFYFF) threads the bilayer.

This sequence belongs to the ATPase protein 8 family. In terms of assembly, F-type ATPases have 2 components, CF(1) - the catalytic core - and CF(0) - the membrane proton channel.

Its subcellular location is the mitochondrion membrane. Functionally, mitochondrial membrane ATP synthase (F(1)F(0) ATP synthase or Complex V) produces ATP from ADP in the presence of a proton gradient across the membrane which is generated by electron transport complexes of the respiratory chain. F-type ATPases consist of two structural domains, F(1) - containing the extramembraneous catalytic core and F(0) - containing the membrane proton channel, linked together by a central stalk and a peripheral stalk. During catalysis, ATP synthesis in the catalytic domain of F(1) is coupled via a rotary mechanism of the central stalk subunits to proton translocation. Part of the complex F(0) domain. Minor subunit located with subunit a in the membrane. The sequence is that of ATP synthase protein 8 (MT-ATP8) from Rhipicephalus sanguineus (Brown dog tick).